A 406-amino-acid polypeptide reads, in one-letter code: Olfactomedin-like protein 3 (406 aa).

The signal sequence occupies residues 1–21 (MGPSAPLLLFFLLSWPGSLQG). Residues 22–101 (QQHHLVEYME…REVDYLETQN (80 aa)) adopt a coiled-coil conformation. Residues 134-401 (DCSYTISQVR…QIVYKLEMKK (268 aa)) form the Olfactomedin-like domain. The cysteines at positions 135 and 328 are disulfide-linked. The N-linked (GlcNAc...) asparagine glycan is linked to Asn248.

Belongs to the OLFML3 family.

It is found in the secreted. Secreted scaffold protein that plays an essential role in dorsoventral patterning during early development. Stabilizes axial formation by restricting chordin (CHRD) activity on the dorsal side. Acts by facilitating the association between the tolloid proteases and their substrate chordin (CHRD), leading to enhance chordin (CHRD) degradation. May have matrix-related function involved in placental and embryonic development, or play a similar role in other physiological processes. The polypeptide is Olfactomedin-like protein 3 (Olfml3) (Rattus norvegicus (Rat)).